Here is a 311-residue protein sequence, read N- to C-terminus: Heme A synthase (311 aa).

The Cytoplasmic portion of the chain corresponds to 1-6 (MQRFIK). The chain crosses the membrane as a helical span at residues 7-27 (WLAVITSLDLLIVLLGGALVT). Residues 28 to 62 (KTGSGQGCGKSWPLCNGEFVPSNLSMETIIELSHR) lie on the Extracellular side of the membrane. The cysteines at positions 35 and 42 are disulfide-linked. Glu58 is a catalytic residue. Residue His61 coordinates heme o. The helical transmembrane segment at 63 to 83 (LTSGSAGILVTLLCILSWKYY) threads the bilayer. The Cytoplasmic segment spans residues 84–91 (KHVRETKT). The helical transmembrane segment at 92–112 (LAILSFVFLVAQALMGAAAVV) threads the bilayer. Residues 113–121 (WGQMPAVLA) are Extracellular-facing. Residues 122–142 (IHFGISLISFASVILLTCLIF) traverse the membrane as a helical segment. His123 is a heme o binding site. The Cytoplasmic segment spans residues 143-159 (EIDQKFDARSLIMDKKM). Residues 160–180 (KFHIYGVTIYCYLVVYTGALV) form a helical membrane-spanning segment. Residues 181–211 (RHERASLACPDFPLCSKNRPMPTQLHEWVQM) are Extracellular-facing. Cys189 and Cys195 are joined by a disulfide. Residues 212–232 (GHRLAAMLIFVWILYAMILAI) traverse the membrane as a helical segment. His213 serves as a coordination point for heme b. Over 233–243 (RHYKQQPVVYW) the chain is Cytoplasmic. Residues 244-264 (GWIISFILVTLQAIVGILVVF) form a helical membrane-spanning segment. Over 265–271 (TNASLAM) the chain is Extracellular. Residues 272–292 (ALLHSLFISCLFAVLCYLVML) traverse the membrane as a helical segment. His275 contacts heme b. The Cytoplasmic portion of the chain corresponds to 293–311 (GTRSKVNAKEAASTSKQTK).

The protein belongs to the COX15/CtaA family. Type 1 subfamily. Interacts with CtaB. Requires heme b as cofactor.

The protein resides in the cell membrane. The enzyme catalyses Fe(II)-heme o + 2 A + H2O = Fe(II)-heme a + 2 AH2. The protein operates within porphyrin-containing compound metabolism; heme A biosynthesis; heme A from heme O: step 1/1. In terms of biological role, catalyzes the conversion of heme O to heme A by two successive hydroxylations of the methyl group at C8. The first hydroxylation forms heme I, the second hydroxylation results in an unstable dihydroxymethyl group, which spontaneously dehydrates, resulting in the formyl group of heme A. In Bacillus cereus (strain 03BB102), this protein is Heme A synthase.